Reading from the N-terminus, the 241-residue chain is Homeobox protein TGIF2LX (241 aa).

Disordered stretches follow at residues 1–58 and 126–209; these read MEAA…GNLP and TGKD…VSPE. The span at 21-39 shows a compositional bias: polar residues; that stretch reads AKTQSPAQDTSIMSRNNAD. A DNA-binding region (homeobox; TALE-type) is located at residues 48–111; the sequence is EHKKKRKGNL…INARRRILPD (64 aa).

This sequence belongs to the TALE/TGIF homeobox family.

The protein resides in the nucleus. Its function is as follows. May have a transcription role in testis. The protein is Homeobox protein TGIF2LX (TGIF2LX) of Gorilla gorilla gorilla (Western lowland gorilla).